The following is a 955-amino-acid chain: Valine--tRNA ligase (955 aa).

Positions 41 to 51 match the 'HIGH' region motif; sequence PNITGSLHMGH. The 'KMSKS' region signature appears at 554 to 558; sequence KMSKS. Residue Lys-557 coordinates ATP. Residues 926-946 are a coiled coil; it reads QEKNKLLKLNEINLKLSEQIK.

The protein belongs to the class-I aminoacyl-tRNA synthetase family. ValS type 1 subfamily. Monomer.

It is found in the cytoplasm. The enzyme catalyses tRNA(Val) + L-valine + ATP = L-valyl-tRNA(Val) + AMP + diphosphate. In terms of biological role, catalyzes the attachment of valine to tRNA(Val). As ValRS can inadvertently accommodate and process structurally similar amino acids such as threonine, to avoid such errors, it has a 'posttransfer' editing activity that hydrolyzes mischarged Thr-tRNA(Val) in a tRNA-dependent manner. This chain is Valine--tRNA ligase, found in Buchnera aphidicola subsp. Acyrthosiphon pisum (strain APS) (Acyrthosiphon pisum symbiotic bacterium).